Consider the following 390-residue polypeptide: Digeranylgeranylglycerophospholipid reductase (390 aa).

Residues A18, E37, C48, A49, A51, R98, V122, D278, G290, and I291 each contribute to the FAD site. Residue V368 coordinates a 2,3-bis-O-(geranylgeranyl)-sn-glycerol 1-phospholipid.

Belongs to the geranylgeranyl reductase family. DGGGPL reductase subfamily. Requires FAD as cofactor.

It catalyses the reaction a 2,3-bis-O-phytanyl-sn-glycerol 1-phospholipid + 8 A = a 2,3-bis-O-(geranylgeranyl)-sn-glycerol 1-phospholipid + 8 AH2. It carries out the reaction 2,3-bis-O-(phytanyl)-sn-glycerol 1-phosphate + 8 A = 2,3-bis-O-(geranylgeranyl)-sn-glycerol 1-phosphate + 8 AH2. The catalysed reaction is CDP-2,3-bis-O-(geranylgeranyl)-sn-glycerol + 8 AH2 = CDP-2,3-bis-O-(phytanyl)-sn-glycerol + 8 A. The enzyme catalyses archaetidylserine + 8 AH2 = 2,3-bis-O-phytanyl-sn-glycero-3-phospho-L-serine + 8 A. It functions in the pathway membrane lipid metabolism; glycerophospholipid metabolism. Its function is as follows. Is involved in the reduction of 2,3-digeranylgeranylglycerophospholipids (unsaturated archaeols) into 2,3-diphytanylglycerophospholipids (saturated archaeols) in the biosynthesis of archaeal membrane lipids. Catalyzes the formation of archaetidic acid (2,3-di-O-phytanyl-sn-glyceryl phosphate) from 2,3-di-O-geranylgeranylglyceryl phosphate (DGGGP) via the hydrogenation of each double bond of the isoprenoid chains. Is also probably able to reduce double bonds of geranyl groups in CDP-2,3-bis-O-(geranylgeranyl)-sn-glycerol and archaetidylserine, thus acting at various stages in the biosynthesis of archaeal membrane lipids. The chain is Digeranylgeranylglycerophospholipid reductase from Methanococcus maripaludis (strain C7 / ATCC BAA-1331).